The primary structure comprises 221 residues: Iron-sulfur cluster repair protein YtfE (221 aa).

It belongs to the RIC family. YtfE subfamily. Homodimer.

Its subcellular location is the cytoplasm. Its function is as follows. Di-iron-containing protein involved in the repair of iron-sulfur clusters damaged by oxidative and nitrosative stress conditions. The protein is Iron-sulfur cluster repair protein YtfE of Dickeya chrysanthemi (strain Ech1591) (Dickeya zeae (strain Ech1591)).